Consider the following 201-residue polypeptide: ADP-ribosylation factor-related protein 1 (201 aa).

Met1 bears the N-acetylmethionine mark. Residues 24 to 31, 75 to 79, and 134 to 137 each bind GTP; these read GLDNAGKT, DLGGQ, and NKQD.

Belongs to the small GTPase superfamily. Arf family. Interacts with SYS1.

It localises to the golgi apparatus. The protein resides in the trans-Golgi network. Functionally, trans-Golgi-associated GTPase that regulates protein sorting. Controls the targeting of ARL1 and its effector to the trans-Golgi. Required for the lipidation of chylomicrons in the intestine and required for VLDL lipidation in the liver. This Mus musculus (Mouse) protein is ADP-ribosylation factor-related protein 1 (Arfrp1).